A 118-amino-acid chain; its full sequence is Large ribosomal subunit protein bL20 (118 aa).

It belongs to the bacterial ribosomal protein bL20 family.

Binds directly to 23S ribosomal RNA and is necessary for the in vitro assembly process of the 50S ribosomal subunit. It is not involved in the protein synthesizing functions of that subunit. The sequence is that of Large ribosomal subunit protein bL20 from Francisella tularensis subsp. holarctica (strain FTNF002-00 / FTA).